Reading from the N-terminus, the 134-residue chain is Methylglyoxal synthase (134 aa).

In terms of domain architecture, MGS-like spans 1–134; it reads MHIALIAHDE…DWRDLRRNDE (134 aa). Residues H8, K12, 34–37, and 54–55 each bind substrate; these read TGTT and SG. The active-site Proton donor/acceptor is D60. H87 provides a ligand contact to substrate.

It belongs to the methylglyoxal synthase family.

The catalysed reaction is dihydroxyacetone phosphate = methylglyoxal + phosphate. Its function is as follows. Catalyzes the formation of methylglyoxal from dihydroxyacetone phosphate. The protein is Methylglyoxal synthase of Listeria welshimeri serovar 6b (strain ATCC 35897 / DSM 20650 / CCUG 15529 / CIP 8149 / NCTC 11857 / SLCC 5334 / V8).